We begin with the raw amino-acid sequence, 470 residues long: Tryptophan synthase beta chain 1, chloroplastic (470 aa).

Residues 1 to 10 show a composition bias toward polar residues; that stretch reads MAASGTSATF. Residues 1 to 24 form a disordered region; that stretch reads MAASGTSATFRASVSSAPSSSSQL. The segment covering 12–22 has biased composition (low complexity); it reads ASVSSAPSSSS. Position 165 is an N6-(pyridoxal phosphate)lysine (Lys-165).

This sequence belongs to the TrpB family. Tetramer of two alpha and two beta chains. Pyridoxal 5'-phosphate serves as cofactor.

It is found in the plastid. The protein resides in the chloroplast. The catalysed reaction is (1S,2R)-1-C-(indol-3-yl)glycerol 3-phosphate + L-serine = D-glyceraldehyde 3-phosphate + L-tryptophan + H2O. It functions in the pathway amino-acid biosynthesis; L-tryptophan biosynthesis; L-tryptophan from chorismate: step 5/5. The beta subunit is responsible for the synthesis of L-tryptophan from indole and L-serine. The chain is Tryptophan synthase beta chain 1, chloroplastic (TSB1) from Arabidopsis thaliana (Mouse-ear cress).